We begin with the raw amino-acid sequence, 373 residues long: 3-dehydroquinate synthase (373 aa).

Residues Glu67 to Lys72, Gly101 to Asp105, Thr125 to Thr126, Lys138, and Lys147 contribute to the NAD(+) site. Glu180, His240, and His256 together coordinate Zn(2+).

This sequence belongs to the sugar phosphate cyclases superfamily. Dehydroquinate synthase family. The cofactor is NAD(+). It depends on Co(2+) as a cofactor. Zn(2+) is required as a cofactor.

The protein resides in the cytoplasm. The enzyme catalyses 7-phospho-2-dehydro-3-deoxy-D-arabino-heptonate = 3-dehydroquinate + phosphate. The protein operates within metabolic intermediate biosynthesis; chorismate biosynthesis; chorismate from D-erythrose 4-phosphate and phosphoenolpyruvate: step 2/7. Functionally, catalyzes the conversion of 3-deoxy-D-arabino-heptulosonate 7-phosphate (DAHP) to dehydroquinate (DHQ). This Chlamydia muridarum (strain MoPn / Nigg) protein is 3-dehydroquinate synthase (aroB).